The chain runs to 267 residues: Alpha carbonic anhydrase 4 (267 aa).

A signal peptide spans 1–26; that stretch reads MDTNAKTIFFMAMCFIYLSFPNISHA. Residue Asn22 is glycosylated (N-linked (GlcNAc...) asparagine). The Alpha-carbonic anhydrase domain maps to 34-264; the sequence is TPFTYEQKTE…SKGRSVWFYD (231 aa). Cys59 and Cys214 are disulfide-bonded. The Proton acceptor role is filled by His99. Residues His125 and His127 each contribute to the Zn(2+) site. The N-linked (GlcNAc...) asparagine glycan is linked to Asn135. A Zn(2+)-binding site is contributed by His144. Substrate is bound at residue 210–211; that stretch reads TV.

It belongs to the alpha-class carbonic anhydrase family. Requires Zn(2+) as cofactor. N-glycosylated.

The protein resides in the plastid. Its subcellular location is the chloroplast stroma. The enzyme catalyses hydrogencarbonate + H(+) = CO2 + H2O. Reversible hydration of carbon dioxide. The sequence is that of Alpha carbonic anhydrase 4 (ACA4) from Arabidopsis thaliana (Mouse-ear cress).